Consider the following 163-residue polypeptide: SsrA-binding protein (163 aa).

It belongs to the SmpB family.

It localises to the cytoplasm. Its function is as follows. Required for rescue of stalled ribosomes mediated by trans-translation. Binds to transfer-messenger RNA (tmRNA), required for stable association of tmRNA with ribosomes. tmRNA and SmpB together mimic tRNA shape, replacing the anticodon stem-loop with SmpB. tmRNA is encoded by the ssrA gene; the 2 termini fold to resemble tRNA(Ala) and it encodes a 'tag peptide', a short internal open reading frame. During trans-translation Ala-aminoacylated tmRNA acts like a tRNA, entering the A-site of stalled ribosomes, displacing the stalled mRNA. The ribosome then switches to translate the ORF on the tmRNA; the nascent peptide is terminated with the 'tag peptide' encoded by the tmRNA and targeted for degradation. The ribosome is freed to recommence translation, which seems to be the essential function of trans-translation. This chain is SsrA-binding protein, found in Corynebacterium diphtheriae (strain ATCC 700971 / NCTC 13129 / Biotype gravis).